The following is a 146-amino-acid chain: VHLHGDEKAAVLALWDKVDEEKVGGEALGRLLVVYPWTQRFFDSFGDLSTAAAVMGNPKVKAHGKKVLHSFGEGVHHLDDLKVTFAQLSELHCDKLHVDPENFRLLGNVLVVVLAQQFGKAFTPELQAAYQKVVAGVASALAHKYH.

An N-acetylvaline modification is found at Val1. The 145-residue stretch at 2-146 (HLHGDEKAAV…VASALAHKYH (145 aa)) folds into the Globin domain. Position 17 is an N6-succinyllysine (Lys17). Ser44 is modified (phosphoserine). Position 59 is an N6-succinyllysine (Lys59). Residues His63 and His92 each contribute to the heme b site. An Asymmetric dimethylarginine modification is found at Arg104. Thr123 is subject to Phosphothreonine.

The protein belongs to the globin family. As to quaternary structure, heterotetramer of two alpha chains and two beta chains. In terms of tissue distribution, red blood cells.

Functionally, involved in oxygen transport from the lung to the various peripheral tissues. This is Hemoglobin subunit beta-2 (HBB2) from Tapirus terrestris (Lowland tapir).